The chain runs to 632 residues: Extracellular metalloproteinase 2 (632 aa).

The signal sequence occupies residues 1-19 (MHGLLLAGLAVALPLGVAG). Positions 20-244 (HPARPQTALS…VHNVVDYVAS (225 aa)) are excised as a propeptide. N270 is a glycosylation site (N-linked (GlcNAc...) asparagine). The span at 294 to 310 (NNVAAQDNPSGGSQWEN) shows a compositional bias: polar residues. A disordered region spans residues 294–313 (NNVAAQDNPSGGSQWENNYR). H429 lines the Zn(2+) pocket. Residue E430 is part of the active site. H433 serves as a coordination point for Zn(2+).

Belongs to the peptidase M36 family. Zn(2+) serves as cofactor.

It is found in the secreted. Secreted metalloproteinase probably acting as a virulence factor. This Arthroderma otae (Microsporum canis) protein is Extracellular metalloproteinase 2 (MEP2).